The sequence spans 67 residues: Alpha-toxin Tf3 (67 aa).

In terms of domain architecture, LCN-type CS-alpha/beta spans 2-63 (KDGYPVEGDN…EPTKTNGRCK (62 aa)). Disulfide bonds link C12-C62, C16-C38, C24-C45, and C28-C47. Proline amide is present on P64.

This sequence belongs to the long (4 C-C) scorpion toxin superfamily. Sodium channel inhibitor family. Alpha subfamily. Expressed by the venom gland.

The protein localises to the secreted. In terms of biological role, alpha toxins bind voltage-independently at site-3 of sodium channels (Nav) and inhibit the inactivation of the activated channels, thereby blocking neuronal transmission. The sequence is that of Alpha-toxin Tf3 from Tityus fasciolatus (Central Brazilian scorpion).